Here is a 777-residue protein sequence, read N- to C-terminus: Ethylene receptor 4 (777 aa).

A run of 3 helical transmembrane segments spans residues 49–69 (LLIA…ATCA), 77–97 (AVLH…LAAF), and 113–133 (AAKV…LTFI). Cu cation contacts are provided by C88 and H92. The GAF domain occupies 184 to 344 (DAHAILRTTA…VVADQAAVAL (161 aa)). One can recognise a Histidine kinase domain in the interval 387–521 (AMCHAMRRPV…NTGSGACRLS (135 aa)). H390 carries the post-translational modification Phosphohistidine; by autocatalysis. Residues 645 to 774 (RVLLADDDAM…ALGAQLCRVL (130 aa)) form the Response regulatory domain. Residue D696 is modified to 4-aspartylphosphate.

Belongs to the ethylene receptor family. Cu cation serves as cofactor.

It localises to the endoplasmic reticulum membrane. It carries out the reaction ATP + protein L-histidine = ADP + protein N-phospho-L-histidine.. Ethylene receptor related to bacterial two-component regulators. Acts as a redundant negative regulator of ethylene signaling. This is Ethylene receptor 4 (ETR4) from Oryza sativa subsp. japonica (Rice).